A 308-amino-acid polypeptide reads, in one-letter code: Ribosomal RNA large subunit methyltransferase F (308 aa).

It belongs to the methyltransferase superfamily. METTL16/RlmF family.

The protein resides in the cytoplasm. It catalyses the reaction adenosine(1618) in 23S rRNA + S-adenosyl-L-methionine = N(6)-methyladenosine(1618) in 23S rRNA + S-adenosyl-L-homocysteine + H(+). Functionally, specifically methylates the adenine in position 1618 of 23S rRNA. The protein is Ribosomal RNA large subunit methyltransferase F of Salmonella agona (strain SL483).